A 320-amino-acid chain; its full sequence is MSDNLWALARAFIITVVFMPFLIKFLKQSKEQAVIRKLGPDHQSKAGTPSMGGLLFVLAAAISAFIGGAAYHGMSGVVAMIIPVFALVAYAIIGGIDDALKLINHADDGFAFKPKLLAQTLSAVVIMLIMWLLGVPFTLYIPMIGTINLGLFYFVFLWFWLVGWSNATNLTDGLDGLLAGNSVVVYAAYTVIAMHMHNHIIVLFNFSIIGGLLGFLIFNRPKAKIFMGDTGSLALGAGLAIESILLGVPFSLIWFGLIFVIETLSVIIQTVGYHFWHKRIFPMAPIHHSFEKFGWSEWQIDLLFWIVSSILAVAGIFYMN.

Transmembrane regions (helical) follow at residues 5–25 (LWAL…LIKF), 51–71 (MGGL…GAAY), 76–96 (GVVA…IGGI), 124–144 (VVIM…IPMI), 145–165 (GTIN…VGWS), 176–196 (GLLA…AMHM), 198–218 (NHII…FLIF), 233–255 (LALG…LIWF), and 298–318 (WQID…GIFY).

This sequence belongs to the glycosyltransferase 4 family. MraY subfamily. Mg(2+) is required as a cofactor.

The protein localises to the cell membrane. It carries out the reaction UDP-N-acetyl-alpha-D-muramoyl-L-alanyl-gamma-D-glutamyl-L-lysyl-D-alanyl-D-alanine + di-trans,octa-cis-undecaprenyl phosphate = Mur2Ac(oyl-L-Ala-gamma-D-Glu-L-Lys-D-Ala-D-Ala)-di-trans,octa-cis-undecaprenyl diphosphate + UMP. The protein operates within cell wall biogenesis; peptidoglycan biosynthesis. In terms of biological role, catalyzes the initial step of the lipid cycle reactions in the biosynthesis of the cell wall peptidoglycan: transfers peptidoglycan precursor phospho-MurNAc-pentapeptide from UDP-MurNAc-pentapeptide onto the lipid carrier undecaprenyl phosphate, yielding undecaprenyl-pyrophosphoryl-MurNAc-pentapeptide, known as lipid I. The protein is Phospho-N-acetylmuramoyl-pentapeptide-transferase of Leuconostoc citreum (strain KM20).